The sequence spans 134 residues: ATP synthase epsilon chain, chloroplastic (134 aa).

This sequence belongs to the ATPase epsilon chain family. F-type ATPases have 2 components, CF(1) - the catalytic core - and CF(0) - the membrane proton channel. CF(1) has five subunits: alpha(3), beta(3), gamma(1), delta(1), epsilon(1). CF(0) has three main subunits: a, b and c.

It is found in the plastid. The protein localises to the chloroplast thylakoid membrane. Its function is as follows. Produces ATP from ADP in the presence of a proton gradient across the membrane. This is ATP synthase epsilon chain, chloroplastic from Drimys granadensis.